An 85-amino-acid chain; its full sequence is U4-theraphotoxin-Hhn1a (85 aa).

Positions 1-22 (MKVTLIAILTCAAVLVLHTTAA) are cleaved as a signal peptide. Residues 23–48 (EELEAESQLMKVGMPDTELAAVDEER) constitute a propeptide that is removed on maturation. 3 disulfide bridges follow: Cys-52–Cys-66, Cys-56–Cys-77, and Cys-71–Cys-82.

The protein belongs to the neurotoxin 12 (Hwtx-2) family. 02 (Hwtx-2) subfamily. As to quaternary structure, monomer. Expressed by the venom gland.

It localises to the secreted. Neurotoxin active on both insects and mammals. In Cyriopagopus hainanus (Chinese bird spider), this protein is U4-theraphotoxin-Hhn1a.